A 37-amino-acid chain; its full sequence is Large ribosomal subunit protein bL36c (37 aa).

This sequence belongs to the bacterial ribosomal protein bL36 family.

The protein localises to the plastid. The protein resides in the chloroplast. The polypeptide is Large ribosomal subunit protein bL36c (Cucumis sativus (Cucumber)).